A 456-amino-acid polypeptide reads, in one-letter code: Exodeoxyribonuclease 7 large subunit (456 aa).

It belongs to the XseA family. Heterooligomer composed of large and small subunits.

The protein resides in the cytoplasm. The catalysed reaction is Exonucleolytic cleavage in either 5'- to 3'- or 3'- to 5'-direction to yield nucleoside 5'-phosphates.. Functionally, bidirectionally degrades single-stranded DNA into large acid-insoluble oligonucleotides, which are then degraded further into small acid-soluble oligonucleotides. The chain is Exodeoxyribonuclease 7 large subunit from Escherichia coli (strain SE11).